The primary structure comprises 475 residues: Aspartyl/glutamyl-tRNA(Asn/Gln) amidotransferase subunit B (475 aa).

The protein belongs to the GatB/GatE family. GatB subfamily. In terms of assembly, heterotrimer of A, B and C subunits.

The enzyme catalyses L-glutamyl-tRNA(Gln) + L-glutamine + ATP + H2O = L-glutaminyl-tRNA(Gln) + L-glutamate + ADP + phosphate + H(+). The catalysed reaction is L-aspartyl-tRNA(Asn) + L-glutamine + ATP + H2O = L-asparaginyl-tRNA(Asn) + L-glutamate + ADP + phosphate + 2 H(+). Its function is as follows. Allows the formation of correctly charged Asn-tRNA(Asn) or Gln-tRNA(Gln) through the transamidation of misacylated Asp-tRNA(Asn) or Glu-tRNA(Gln) in organisms which lack either or both of asparaginyl-tRNA or glutaminyl-tRNA synthetases. The reaction takes place in the presence of glutamine and ATP through an activated phospho-Asp-tRNA(Asn) or phospho-Glu-tRNA(Gln). The sequence is that of Aspartyl/glutamyl-tRNA(Asn/Gln) amidotransferase subunit B from Hydrogenovibrio crunogenus (strain DSM 25203 / XCL-2) (Thiomicrospira crunogena).